The chain runs to 664 residues: Protein-arginine deiminase type-3 (664 aa).

Belongs to the protein arginine deiminase family. The cofactor is Ca(2+). In terms of tissue distribution, hair follicles, and epidermis at very low levels.

It localises to the cytoplasm. The enzyme catalyses L-arginyl-[protein] + H2O = L-citrullyl-[protein] + NH4(+). In terms of biological role, catalyzes the deimination of arginine residues of proteins. The protein is Protein-arginine deiminase type-3 (PADI3) of Homo sapiens (Human).